The following is a 463-amino-acid chain: tRNA (guanine(37)-N(1))-methyltransferase (463 aa).

S-adenosyl-L-methionine is bound by residues H207, 245–246, 274–275, and N305; these read DL and DG.

The protein belongs to the class I-like SAM-binding methyltransferase superfamily. TRM5/TYW2 family. Monomer.

The protein resides in the mitochondrion matrix. It localises to the nucleus. It is found in the cytoplasm. It catalyses the reaction guanosine(37) in tRNA + S-adenosyl-L-methionine = N(1)-methylguanosine(37) in tRNA + S-adenosyl-L-homocysteine + H(+). Functionally, specifically methylates the N1 position of guanosine-37 in various cytoplasmic and mitochondrial tRNAs. Methylation is not dependent on the nature of the nucleoside 5' of the target nucleoside. This is the first step in the biosynthesis of wybutosine (yW), a modified base adjacent to the anticodon of tRNAs and required for accurate decoding. This is tRNA (guanine(37)-N(1))-methyltransferase from Pediculus humanus subsp. corporis (Body louse).